Here is a 334-residue protein sequence, read N- to C-terminus: Holliday junction branch migration complex subunit RuvB (334 aa).

The interval 4–184 (ADRLIAADAQ…FGIVQRLEFY (181 aa)) is large ATPase domain (RuvB-L). ATP-binding positions include Ile-23, Arg-24, Gly-65, Lys-68, Thr-69, Thr-70, 131 to 133 (EDY), Arg-174, Tyr-184, and Arg-221. Thr-69 provides a ligand contact to Mg(2+). The segment at 185 to 255 (QVADLQHIVG…VAAQALNMLD (71 aa)) is small ATPAse domain (RuvB-S). The interval 258–334 (AAGFDYMDRK…YQHFGIDRAE (77 aa)) is head domain (RuvB-H). DNA is bound by residues Arg-294, Arg-313, and Arg-318.

This sequence belongs to the RuvB family. As to quaternary structure, homohexamer. Forms an RuvA(8)-RuvB(12)-Holliday junction (HJ) complex. HJ DNA is sandwiched between 2 RuvA tetramers; dsDNA enters through RuvA and exits via RuvB. An RuvB hexamer assembles on each DNA strand where it exits the tetramer. Each RuvB hexamer is contacted by two RuvA subunits (via domain III) on 2 adjacent RuvB subunits; this complex drives branch migration. In the full resolvosome a probable DNA-RuvA(4)-RuvB(12)-RuvC(2) complex forms which resolves the HJ.

It is found in the cytoplasm. The enzyme catalyses ATP + H2O = ADP + phosphate + H(+). The RuvA-RuvB-RuvC complex processes Holliday junction (HJ) DNA during genetic recombination and DNA repair, while the RuvA-RuvB complex plays an important role in the rescue of blocked DNA replication forks via replication fork reversal (RFR). RuvA specifically binds to HJ cruciform DNA, conferring on it an open structure. The RuvB hexamer acts as an ATP-dependent pump, pulling dsDNA into and through the RuvAB complex. RuvB forms 2 homohexamers on either side of HJ DNA bound by 1 or 2 RuvA tetramers; 4 subunits per hexamer contact DNA at a time. Coordinated motions by a converter formed by DNA-disengaged RuvB subunits stimulates ATP hydrolysis and nucleotide exchange. Immobilization of the converter enables RuvB to convert the ATP-contained energy into a lever motion, pulling 2 nucleotides of DNA out of the RuvA tetramer per ATP hydrolyzed, thus driving DNA branch migration. The RuvB motors rotate together with the DNA substrate, which together with the progressing nucleotide cycle form the mechanistic basis for DNA recombination by continuous HJ branch migration. Branch migration allows RuvC to scan DNA until it finds its consensus sequence, where it cleaves and resolves cruciform DNA. This chain is Holliday junction branch migration complex subunit RuvB, found in Edwardsiella ictaluri (strain 93-146).